The sequence spans 167 residues: Endoribonuclease YbeY (167 aa).

The Zn(2+) site is built by His-131, His-135, and His-141.

This sequence belongs to the endoribonuclease YbeY family. Zn(2+) serves as cofactor.

It localises to the cytoplasm. Its function is as follows. Single strand-specific metallo-endoribonuclease involved in late-stage 70S ribosome quality control and in maturation of the 3' terminus of the 16S rRNA. This Rickettsia felis (strain ATCC VR-1525 / URRWXCal2) (Rickettsia azadi) protein is Endoribonuclease YbeY.